A 76-amino-acid polypeptide reads, in one-letter code: RNA-binding protein KhpA (76 aa).

One can recognise a KH domain in the interval 29 to 76 (SLTYKLSVSKEDMGRVIGKQGRIAKAIRTLVYAVGSKNDKKIRLEIIE).

Belongs to the KhpA RNA-binding protein family. Forms a complex with KhpB.

It is found in the cytoplasm. A probable RNA chaperone. Forms a complex with KhpB which binds to cellular RNA and controls its expression. Plays a role in peptidoglycan (PG) homeostasis and cell length regulation. This Listeria innocua serovar 6a (strain ATCC BAA-680 / CLIP 11262) protein is RNA-binding protein KhpA.